The sequence spans 461 residues: Argininosuccinate lyase (461 aa).

This sequence belongs to the lyase 1 family. Argininosuccinate lyase subfamily.

It localises to the cytoplasm. The enzyme catalyses 2-(N(omega)-L-arginino)succinate = fumarate + L-arginine. It participates in amino-acid biosynthesis; L-arginine biosynthesis; L-arginine from L-ornithine and carbamoyl phosphate: step 3/3. This is Argininosuccinate lyase from Dehalococcoides mccartyi (strain CBDB1).